The primary structure comprises 143 residues: Dehydrin DHN2 (143 aa).

Residues 1–10 are compositionally biased toward polar residues; the sequence is MEYQGQTGHA. The segment at 1 to 143 is disordered; it reads MEYQGQTGHA…IKEKLPGGQH (143 aa). Residues 24 to 34 show a composition bias toward gly residues; it reads GHGGATGGPTG. A compositionally biased stretch (low complexity) spans 35-46; the sequence is THGAAAAAAGTG. Over residues 51–61 the composition is skewed to basic and acidic residues; sequence TRDDHKTDGVL. Residues 62 to 71 are compositionally biased toward low complexity; it reads RRSGSSSSSS. A compositionally biased stretch (basic and acidic residues) spans 86 to 101; it reads KEKIKEKLPGGAHKDA. The span at 109 to 123 shows a compositional bias: low complexity; it reads AAGEYAGTGTHGAEA. Basic and acidic residues predominate over residues 124–143; it reads TGEKKGVMDKIKEKLPGGQH.

The protein belongs to the plant dehydrin family.

In Hordeum vulgare (Barley), this protein is Dehydrin DHN2 (DHN2).